Consider the following 77-residue polypeptide: Apelin (77 aa).

The first 22 residues, 1-22 (MNVKILTLVIVLVVSLLCSASA), serve as a signal peptide directing secretion. Residues 21–77 (SAGPMASTEHSKEIEEVGSMRTPLRQNPARAGRSQRPAGWRRRRPRPRLSHKGPMPF) form a disordered region. Over residues 59-71 (GWRRRRPRPRLSH) the composition is skewed to basic residues.

The protein belongs to the apelin family.

The protein resides in the secreted. Its subcellular location is the extracellular space. Its function is as follows. Peptide hormone that functions as endogenous ligand for the G-protein-coupled apelin receptor (aplnra and/or aplnrb), that plays a role in cadiovascular homeostasis. Functions as a balanced agonist activating both G(i) protein pathway and beta-arrestin pathway of APLNR. Downstream G proteins activation, apelin can inhibit cAMP production and activate key intracellular effectors such as ERKs. On the other hand, APLNR activation induces beta-arrestin recruitment to the membrane leading to desensitization and internalization of the receptor. Apelin blunts cardiac hypertrophic induction from APLNR on response to pathological stimuli, but also induces myocardial hypertrophy under normal conditions. Involved in the regulation of cardiac precursor cell movements during gastrulation and heart morphogenesis. Plays a role in early coronary blood vessels formation. Mediates myocardial contractility in an ERK1/2-dependent manner. May also have a role in the central control of body fluid homeostasis. The protein is Apelin of Danio rerio (Zebrafish).